A 268-amino-acid polypeptide reads, in one-letter code: Glucosamine-6-phosphate deaminase (268 aa).

Asp-72 serves as the catalytic Proton acceptor; for enolization step. The active-site For ring-opening step is Asp-141. The active-site Proton acceptor; for ring-opening step is His-143. Residue Glu-148 is the For ring-opening step of the active site.

This sequence belongs to the glucosamine/galactosamine-6-phosphate isomerase family. NagB subfamily. Homohexamer.

The catalysed reaction is alpha-D-glucosamine 6-phosphate + H2O = beta-D-fructose 6-phosphate + NH4(+). It functions in the pathway amino-sugar metabolism; N-acetylneuraminate degradation; D-fructose 6-phosphate from N-acetylneuraminate: step 5/5. Allosterically activated by N-acetylglucosamine 6-phosphate (GlcNAc6P). Functionally, catalyzes the reversible isomerization-deamination of glucosamine 6-phosphate (GlcN6P) to form fructose 6-phosphate (Fru6P) and ammonium ion. This chain is Glucosamine-6-phosphate deaminase, found in Proteus mirabilis (strain HI4320).